Here is a 393-residue protein sequence, read N- to C-terminus: NAD(P)H-quinone oxidoreductase subunit H, chloroplastic (393 aa).

It belongs to the complex I 49 kDa subunit family. In terms of assembly, NDH is composed of at least 16 different subunits, 5 of which are encoded in the nucleus.

It is found in the plastid. The protein resides in the chloroplast thylakoid membrane. It catalyses the reaction a plastoquinone + NADH + (n+1) H(+)(in) = a plastoquinol + NAD(+) + n H(+)(out). The enzyme catalyses a plastoquinone + NADPH + (n+1) H(+)(in) = a plastoquinol + NADP(+) + n H(+)(out). Functionally, NDH shuttles electrons from NAD(P)H:plastoquinone, via FMN and iron-sulfur (Fe-S) centers, to quinones in the photosynthetic chain and possibly in a chloroplast respiratory chain. The immediate electron acceptor for the enzyme in this species is believed to be plastoquinone. Couples the redox reaction to proton translocation, and thus conserves the redox energy in a proton gradient. The chain is NAD(P)H-quinone oxidoreductase subunit H, chloroplastic from Nuphar advena (Common spatterdock).